A 315-amino-acid polypeptide reads, in one-letter code: Methionyl-tRNA formyltransferase (315 aa).

A (6S)-5,6,7,8-tetrahydrofolate-binding site is contributed by 113-116 (SLLP).

The protein belongs to the Fmt family.

It carries out the reaction L-methionyl-tRNA(fMet) + (6R)-10-formyltetrahydrofolate = N-formyl-L-methionyl-tRNA(fMet) + (6S)-5,6,7,8-tetrahydrofolate + H(+). Attaches a formyl group to the free amino group of methionyl-tRNA(fMet). The formyl group appears to play a dual role in the initiator identity of N-formylmethionyl-tRNA by promoting its recognition by IF2 and preventing the misappropriation of this tRNA by the elongation apparatus. In Yersinia pseudotuberculosis serotype O:1b (strain IP 31758), this protein is Methionyl-tRNA formyltransferase.